A 117-amino-acid chain; its full sequence is B-box domain protein 30 (117 aa).

The segment at 27–73 adopts a B box-type; atypical zinc-finger fold; that stretch reads KAPVSCELCGENATVYCEADAAFLCRKCDRWVHSANFLARRHLRRVI. The Zn(2+) site is built by Cys-32, Cys-35, Cys-54, and His-59. A PFVFL motif is present at residues 113-117; sequence PFVFL.

Interacts with CO (via B-box) and with TPL (via PFVFL motif). In terms of tissue distribution, highly expressed in shoot apical meristems and in vascular tissues of leaves. Also detected in petioles.

It localises to the nucleus. In terms of biological role, developmental regulator acting by forming heterodimeric complexes, that sequester CO and CO-like (COL) proteins into non-functional complexes. Engages CO and the transcriptional repressor TPL in a tripartite complex. Involved in the CO-mediated long-day flowering-promotion pathway. In Arabidopsis thaliana (Mouse-ear cress), this protein is B-box domain protein 30.